We begin with the raw amino-acid sequence, 340 residues long: Major histocompatibility complex class I-related protein 1 (340 aa).

The first 22 residues, 1–22 (MGELTAFLLPLIIVLMVKHSNS), serve as a signal peptide directing secretion. Residues 23 to 109 (RTHSLRYFRL…KRLQRHYNHS (87 aa)) form an alpha-1 region. An antigen-binding cleft region spans residues 23–201 (RTHSLRYFRL…EYGKDTLQRT (179 aa)). The Extracellular segment spans residues 23 to 302 (RTHSLRYFRL…QESEAIPLVM (280 aa)). Residues Y29 and R31 each contribute to the 8-(9H-purin-6-yl)-2-oxa-8-azabicyclo[3.3.1]nona-3,6-diene-4,6-dicarbaldehyde site. The 5-(2-oxoethylideneamino)-6-(D-ribitylamino)uracil site is built by R31, S46, and K65. The 5-(2-oxopropylideneamino)-6-(D-ribitylamino)uracil site is built by R31, S46, and K65. The 7-hydroxy-6-methyl-8-(1-D-ribityl)lumazine site is built by R31, S46, and K65. 8-(9H-purin-6-yl)-2-oxa-8-azabicyclo[3.3.1]nona-3,6-diene-4,6-dicarbaldehyde contacts are provided by K65 and H80. A 2-amino-4-oxopteridine-6-carbaldehyde-binding site is contributed by K65. Residue K65 coordinates pyridoxal. N107 carries an N-linked (GlcNAc...) asparagine glycan. An alpha-2 region spans residues 110-201 (GSHTYQRMIG…EYGKDTLQRT (92 aa)). Residue R116 coordinates 8-(9H-purin-6-yl)-2-oxa-8-azabicyclo[3.3.1]nona-3,6-diene-4,6-dicarbaldehyde. Residues R116, Y174, and Q175 each coordinate 5-(2-oxoethylideneamino)-6-(D-ribitylamino)uracil. 5-(2-oxopropylideneamino)-6-(D-ribitylamino)uracil-binding residues include R116, Y174, and Q175. R116, Y174, and Q175 together coordinate 7-hydroxy-6-methyl-8-(1-D-ribityl)lumazine. Intrachain disulfides connect C120/C183 and C222/C278. Residues 202–293 (EPPLVRVNRK…GVHVVLQVPQ (92 aa)) form an alpha-3 region. The Ig-like C1-type domain occupies 203–282 (PPLVRVNRKE…SNLYSCHVEH (80 aa)). A connecting peptide region spans residues 294-302 (ESEAIPLVM). A helical transmembrane segment spans residues 303–323 (KAVSGSIVFVIVLAGVGVLVW). The Cytoplasmic segment spans residues 324–340 (RRRPREQNGAVYLPTPD).

Belongs to the MHC class I family. Heterotrimer that consists of MR1, B2M and metabolite antigen. Major classes of metabolite ligands presented by MR1 include riboflavin-related antigens, pyrimidines and ribityl lumazines, nucleobase adducts and folate derivatives. Forms reversible covalent Schiff base complexes with microbial pyrimidine-based metabolite, which serves as a molecular switch triggering complete folding, stable association with B2M and translocation of the ternary complex from endoplasmic reticulum to the plasma membrane. Alternatively, forms non-Schiff base complexes with ribityl lumazines. On antigen-presenting cells, the ternary complex interacts with TCR on MR1-restricted T cells. Interacts with TAPBP and TAPBPL chaperones in the endoplasmic reticulum. TAPBP associated or not with MHC class I peptide loading complex binds ligand-free MR1 or MR1-B2M complex, providing for stable MR1 pools ready for metabolite antigen processing. TAPBPL interacts with MR1 in a ligand-independent way; this interaction may stabilize MR1 pool and facilitate ligand loading and dissociation. Structurally, MR1-B2M heterodimer adopts a topology similar to classical MHC class I molecules, with alpha-1 and alpha-2 domains of MR1 forming the antigen-binding cleft composed of two alpha-helices resting on a floor of 7-stranded anti-parallel beta-pleated sheet. MR1-B2M heterodimer (via alpha-helices) interacts with TCR (via CDR domains). Post-translationally, N-glycosylated.

It localises to the cell membrane. The protein resides in the endoplasmic reticulum membrane. Its subcellular location is the golgi apparatus membrane. The protein localises to the early endosome membrane. It is found in the late endosome membrane. In terms of biological role, antigen-presenting molecule specialized in displaying microbial pyrimidine-based metabolites to alpha-beta T cell receptors (TCR) on innate-type mucosal-associated invariant T (MAIT) cells. In complex with B2M preferentially presents riboflavin-derived metabolites to semi-invariant TCRs on MAIT cells, guiding immune surveillance of the microbial metabolome at mucosal epithelial barriers. Signature pyrimidine-based microbial antigens are generated via non-enzymatic condensation of metabolite intermediates of the riboflavin pathway with by-products arising from other metabolic pathways such as glycolysis. Typical potent antigenic metabolites are 5-(2-oxoethylideneamino)-6-D-ribitylaminouracil (5-OE-RU) and 5-(2-oxopropylideneamino)-6-D-ribitylaminouracil (5-OP-RU), products of condensation of 5-amino-6-D-ribityaminouracil (5-A-RU) with glyoxal or methylglyoxal by-products, respectively. May present microbial antigens to various MAIT cell subsets, providing for unique recognition of diverse microbes, including pathogens that do not synthesize riboflavin. Upon antigen recognition, elicits rapid innate-type MAIT cell activation to eliminate pathogenic microbes by directly killing infected cells. During T cell development, drives thymic selection and post-thymic terminal differentiation of MAIT cells in a process dependent on commensal microflora. Acts as an immune sensor of cancer cell metabolome. May present a tumor-specific or -associated metabolite essential for cancer cell survival to a pan-cancer TCR on a non-MAIT CD8-positive T cell clone, triggering T cell-mediated killing of a wide range of cancer cell types. May present tumor-enriched pyridoxal and pyridoxal 5'-phosphate antigens, enabling preferential recognition of cancer cells. Presents nucleobase carbonyl adducts generated during oxidative stress. Captures M3Ade, a nucleobase adduct composed of one adenine modified by a malondialdehyde trimer, for recognition by MR1-restricted T cell clones expressing a polyclonal TCR repertoire. In Pongo abelii (Sumatran orangutan), this protein is Major histocompatibility complex class I-related protein 1.